The primary structure comprises 154 residues: 6,7-dimethyl-8-ribityllumazine synthase (154 aa).

5-amino-6-(D-ribitylamino)uracil is bound by residues Phe15, 47–49 (TFD), and 71–73 (AVI). (2S)-2-hydroxy-3-oxobutyl phosphate is bound at residue 76–77 (ET). Catalysis depends on His79, which acts as the Proton donor. Leu104 serves as a coordination point for 5-amino-6-(D-ribitylamino)uracil. Arg119 contributes to the (2S)-2-hydroxy-3-oxobutyl phosphate binding site.

Belongs to the DMRL synthase family.

It carries out the reaction (2S)-2-hydroxy-3-oxobutyl phosphate + 5-amino-6-(D-ribitylamino)uracil = 6,7-dimethyl-8-(1-D-ribityl)lumazine + phosphate + 2 H2O + H(+). Its pathway is cofactor biosynthesis; riboflavin biosynthesis; riboflavin from 2-hydroxy-3-oxobutyl phosphate and 5-amino-6-(D-ribitylamino)uracil: step 1/2. Catalyzes the formation of 6,7-dimethyl-8-ribityllumazine by condensation of 5-amino-6-(D-ribitylamino)uracil with 3,4-dihydroxy-2-butanone 4-phosphate. This is the penultimate step in the biosynthesis of riboflavin. The protein is 6,7-dimethyl-8-ribityllumazine synthase of Saccharolobus solfataricus (strain ATCC 35092 / DSM 1617 / JCM 11322 / P2) (Sulfolobus solfataricus).